Here is a 285-residue protein sequence, read N- to C-terminus: uncharacterized protein (285 aa).

It belongs to the methyltransferase superfamily.

This is an uncharacterized protein from Mycobacterium tuberculosis (strain CDC 1551 / Oshkosh).